The following is a 402-amino-acid chain: Cytochrome b561 and DOMON domain-containing protein At4g17280 (402 aa).

The signal sequence occupies residues 1-31 (MSNHMSIMKFLNQILCLSLILSISMTTLSFA). Residues 54 to 171 (LDSFLHYTYE…GTINTVWQDG (118 aa)) enclose the DOMON domain. Residues 183–379 (TSGNNVRSVS…LEAFTWYVVI (197 aa)) enclose the Cytochrome b561 domain. The next 2 helical transmembrane spans lie at 218 to 238 (IHGI…AIIA) and 250 to 270 (AWFY…VAGW). Heme b contacts are provided by His-219, His-255, and His-288. A helical membrane pass occupies residues 290 to 310 (AIGIALFSLATVQVFAMFLRP). His-324 serves as a coordination point for heme b. Helical transmembrane passes span 326–346 (TIGY…LGIL) and 359–379 (IIVV…YVVI).

The cofactor is heme b.

The protein resides in the membrane. Its function is as follows. May act as a catecholamine-responsive trans-membrane electron transporter. The protein is Cytochrome b561 and DOMON domain-containing protein At4g17280 of Arabidopsis thaliana (Mouse-ear cress).